Reading from the N-terminus, the 699-residue chain is MSSMPVHIERPAELTAKQRLQLEKKVRSMKYADLAVQGTNTSSIASKRSVERLYADVLGTKVQGSNGQPREYFKYFVSKPLRRSPCINRGYWLRLMAIRTSLRCIAEGTGQRDILVVNLGCGYDPLPFQLLDHTDDAQSEFDDRMSFVDVDYPDLIAKKLEIVKNTPELQHILGGAAGDAAGPVVYRTAKYMAAACDLNDSAAFGALTESFHPRSDEVVVFIAEVSLAYMRPERADAIIEACGRIPNSHFILLEQLLPAGEHSPFSRTMLSHFKSNDSPLQSVSSYPTISEQEVRFKRLGFKNVNAGDMHQLWRSLDKELVSKVQAVEPFDELEEFYLFCHHYIIAHATNDLSFRFGPKYAFPQVPQSPSKSCSSNSPMELVTAVDTDLLQRKFGASVVVDSDTILFSFGCLHNKLENILVMGDHDGAFKISKGPAPPARMCHTFTKLDDRTIFLVGGRQSPTKPLGDAWLLKLRDGEWHWEMCAPLMYPRFRHNCVNVGKGKALIYGGETDGATFLIYDCESNTYYEPVYPRTFPRKVSAAMCYDFQSNRGYILGGALDNMEVDDTLCTFAFDARTNSIEILETSSHPLYQRYGAKSVVREAGHMLIVGGVSPHMLFNDTTSIIEVELTTNKVNCLQIPSSLWKNHAQLLVGFELQIMSDGTVLIFGGGAVCYGFGAAWNGILRLGRETIAAIPLRIL.

S-adenosyl-L-methionine contacts are provided by residues arginine 94, glycine 120, aspartate 151, 197 to 198, and glutamate 224; that span reads DL.

It belongs to the methyltransferase superfamily. LCMT family.

The catalysed reaction is 7-[(3S)-3-amino-3-carboxypropyl]wyosine(37) in tRNA(Phe) + S-adenosyl-L-methionine = 7-[(3S)-(3-amino-3-methoxycarbonyl)propyl]wyosine(37) in tRNA(Phe) + S-adenosyl-L-homocysteine. It carries out the reaction 7-[(3S)-(3-amino-3-methoxycarbonyl)propyl]wyosine(37) in tRNA(Phe) + S-adenosyl-L-methionine + CO2 = wybutosine(37) in tRNA(Phe) + S-adenosyl-L-homocysteine + 2 H(+). It functions in the pathway tRNA modification; wybutosine-tRNA(Phe) biosynthesis. Probable S-adenosyl-L-methionine-dependent methyltransferase that acts as a component of the wybutosine biosynthesis pathway. Wybutosine is a hyper modified guanosine with a tricyclic base found at the 3'-position adjacent to the anticodon of eukaryotic phenylalanine tRNA. May methylate the carboxyl group of leucine residues to form alpha-leucine ester residues. This chain is tRNA wybutosine-synthesizing protein 4 (PPM2), found in Eremothecium gossypii (strain ATCC 10895 / CBS 109.51 / FGSC 9923 / NRRL Y-1056) (Yeast).